The sequence spans 350 residues: Tetraacyldisaccharide 4'-kinase (350 aa).

49-56 (TTGGTGKT) is an ATP binding site.

Belongs to the LpxK family.

The catalysed reaction is a lipid A disaccharide + ATP = a lipid IVA + ADP + H(+). It functions in the pathway glycolipid biosynthesis; lipid IV(A) biosynthesis; lipid IV(A) from (3R)-3-hydroxytetradecanoyl-[acyl-carrier-protein] and UDP-N-acetyl-alpha-D-glucosamine: step 6/6. Transfers the gamma-phosphate of ATP to the 4'-position of a tetraacyldisaccharide 1-phosphate intermediate (termed DS-1-P) to form tetraacyldisaccharide 1,4'-bis-phosphate (lipid IVA). The polypeptide is Tetraacyldisaccharide 4'-kinase (Chlorobaculum tepidum (strain ATCC 49652 / DSM 12025 / NBRC 103806 / TLS) (Chlorobium tepidum)).